We begin with the raw amino-acid sequence, 694 residues long: Follicle-stimulating hormone receptor (694 aa).

A signal peptide spans 1-17; it reads MALLLVSLLAFLGSGAG. Intrachain disulfides connect Cys-18-Cys-25 and Cys-23-Cys-32. The 29-residue stretch at 18–46 folds into the LRRNT domain; that stretch reads CHHWLCHCSDRVFLCQDSKVTEIPPDLPR. The Extracellular segment spans residues 18-365; that stretch reads CHHWLCHCSD…EDIMGYNILR (348 aa). LRR repeat units lie at residues 49-72, 73-97, 98-118, 119-143, 144-169, 170-192, 193-216, 217-240, and 241-259; these read IELRFVLTKLRVIPQGSFSGFKDL, EKIEISQNDVLEVIEADVFSNLPKL, HEIRIERANTLLYINPEAFQN, LPNLRYLLISNTGIKHLPVVHKIQS, LQKVLLDIQDNINLHTIARNSFMGLS, FDSLILWLNKNGIQEIHNCAFNG, TQLDELNLSDNNNLEELPNDVFRG, ASGPVILDISRTKVHSLPSHGLEN, and LKKLRARSTYSLKKLPSLD. Asn-191 and Asn-199 each carry an N-linked (GlcNAc...) asparagine glycan. Intrachain disulfides connect Cys-275–Cys-345, Cys-276–Cys-292, Cys-276–Cys-355, and Cys-292–Cys-337. Residues Asn-293 and Asn-311 are each glycosylated (N-linked (GlcNAc...) asparagine). A helical transmembrane segment spans residues 366 to 386; that stretch reads VLIWFISILAITGNITVLVIL. At 387–397 the chain is on the cytoplasmic side; sequence TTSQYKLTVPR. The chain crosses the membrane as a helical span at residues 398-420; it reads FLMCNLAFADLCIGIYLLPIASV. The Extracellular portion of the chain corresponds to 421-442; that stretch reads DIHTKSQYHNYAIDWQTAVGCD. Residues Cys-441 and Cys-516 are joined by a disulfide bond. Residues 443-464 traverse the membrane as a helical segment; that stretch reads AAGFFTAFASELSVYTLTAIPL. Residues 465–484 lie on the Cytoplasmic side of the membrane; the sequence is ERWHTITHAMQLERKVQLRH. The chain crosses the membrane as a helical span at residues 485–507; it reads AASVMVMGWVFAFAAALLPIFGV. At 508–527 the chain is on the extracellular side; sequence SSYMKVSICLPIDIDSPLSQ. The chain crosses the membrane as a helical span at residues 528-549; sequence LYVMALLVLNVLAFVVICGCYT. At 550–572 the chain is on the cytoplasmic side; the sequence is HIYLTVRNPNIVSSSSDTKIAKR. The helical transmembrane segment at 573-596 threads the bilayer; the sequence is MATLIFTDFLCMAPISLFAISASL. The Extracellular portion of the chain corresponds to 597-607; that stretch reads KAPLITVSKAK. The chain crosses the membrane as a helical span at residues 608–629; it reads ILLVLFYPINSCANPFLYAIFT. Residues 630 to 694 are Cytoplasmic-facing; sequence KNFRRDFFIL…LVPLSQSAHN (65 aa).

Belongs to the G-protein coupled receptor 1 family. FSH/LSH/TSH subfamily. Homotrimer. Functions as a homotrimer binding the FSH hormone heterodimer composed of CGA and FSHB. Interacts with ARRB2. Interacts with APPL2; interaction is independent of follicle stimulating hormone stimulation. In terms of processing, N-glycosylated; indirectly required for FSH-binding, possibly via a conformational change that allows high affinity binding of hormone.

The protein resides in the cell membrane. Functionally, g protein-coupled receptor for follitropin, the follicle-stimulating hormone. Through cAMP production activates the downstream PI3K-AKT and ERK1/ERK2 signaling pathways. This Mesocricetus auratus (Golden hamster) protein is Follicle-stimulating hormone receptor (FSHR).